Consider the following 88-residue polypeptide: Mitochondrial import inner membrane translocase subunit Tim10 (88 aa).

Residues 29–54 carry the Twin CX3C motif motif; it reads CHRKCVPPHYKEAELSKGEAVCLDRC. 2 cysteine pairs are disulfide-bonded: C29-C54 and C33-C50.

This sequence belongs to the small Tim family. As to quaternary structure, heterohexamer; composed of 3 copies of TIMM9 and 3 copies of TIMM10/TIM10A, named soluble 70 kDa complex. The complex forms a 6-bladed alpha-propeller structure and associates with the TIMM22 component of the TIM22 complex. Interacts with multi-pass transmembrane proteins in transit.

The protein localises to the mitochondrion inner membrane. Functionally, mitochondrial intermembrane chaperone that participates in the import and insertion of multi-pass transmembrane proteins into the mitochondrial inner membrane. May also be required for the transfer of beta-barrel precursors from the TOM complex to the sorting and assembly machinery (SAM complex) of the outer membrane. Acts as a chaperone-like protein that protects the hydrophobic precursors from aggregation and guide them through the mitochondrial intermembrane space. This Danio rerio (Zebrafish) protein is Mitochondrial import inner membrane translocase subunit Tim10 (timm10).